The sequence spans 246 residues: Chlorophyll a-b binding protein 6A, chloroplastic (246 aa).

A chloroplast-targeting transit peptide spans 1-45 (MASNTLMSCGIPAVCPSFLSSTKSKFAAAMPVYVGATNFMSRFSM). Trp-49 contributes to the chlorophyll b binding site. Chlorophyll a-binding residues include Phe-69, Glu-88, and His-91. Arg-93 is a binding site for chlorophyll b. A helical membrane pass occupies residues 94–114 (WAMLAVPGIIVPEALGLGNWV). A chlorophyll a-binding site is contributed by Leu-130. The chain crosses the membrane as a helical span at residues 133–153 (PVPWGTLPTILAIEFLAIAFV). Residues Val-134, Glu-154, and Arg-157 each coordinate chlorophyll b. Chlorophyll a contacts are provided by Lys-191, Glu-192, Asn-195, Arg-197, Gln-209, and His-225.

It belongs to the light-harvesting chlorophyll a/b-binding (LHC) protein family. In terms of assembly, the LHC complex consists of chlorophyll a-b binding proteins. Binds at least 14 chlorophylls (8 Chl-a and 6 Chl-b) and carotenoids such as lutein and neoxanthin. is required as a cofactor. Post-translationally, photoregulated by reversible phosphorylation of its threonine residues.

The protein localises to the plastid. It localises to the chloroplast thylakoid membrane. The light-harvesting complex (LHC) functions as a light receptor, it captures and delivers excitation energy to photosystems with which it is closely associated. The protein is Chlorophyll a-b binding protein 6A, chloroplastic (CAB6A) of Solanum lycopersicum (Tomato).